Reading from the N-terminus, the 159-residue chain is 2-C-methyl-D-erythritol 2,4-cyclodiphosphate synthase (159 aa).

A divalent metal cation is bound by residues aspartate 10 and histidine 12. Residues 10–12 (DVH) and 36–37 (HS) each bind 4-CDP-2-C-methyl-D-erythritol 2-phosphate. Histidine 44 provides a ligand contact to a divalent metal cation. 4-CDP-2-C-methyl-D-erythritol 2-phosphate contacts are provided by residues 58–60 (DIG), 134–137 (TTTE), phenylalanine 141, and arginine 144.

Belongs to the IspF family. In terms of assembly, homotrimer. Requires a divalent metal cation as cofactor.

The catalysed reaction is 4-CDP-2-C-methyl-D-erythritol 2-phosphate = 2-C-methyl-D-erythritol 2,4-cyclic diphosphate + CMP. It functions in the pathway isoprenoid biosynthesis; isopentenyl diphosphate biosynthesis via DXP pathway; isopentenyl diphosphate from 1-deoxy-D-xylulose 5-phosphate: step 4/6. Its function is as follows. Involved in the biosynthesis of isopentenyl diphosphate (IPP) and dimethylallyl diphosphate (DMAPP), two major building blocks of isoprenoid compounds. Catalyzes the conversion of 4-diphosphocytidyl-2-C-methyl-D-erythritol 2-phosphate (CDP-ME2P) to 2-C-methyl-D-erythritol 2,4-cyclodiphosphate (ME-CPP) with a corresponding release of cytidine 5-monophosphate (CMP). The chain is 2-C-methyl-D-erythritol 2,4-cyclodiphosphate synthase from Bacteroides fragilis (strain ATCC 25285 / DSM 2151 / CCUG 4856 / JCM 11019 / LMG 10263 / NCTC 9343 / Onslow / VPI 2553 / EN-2).